Consider the following 508-residue polypeptide: 2,3-bisphosphoglycerate-independent phosphoglycerate mutase (508 aa).

Mn(2+)-binding residues include aspartate 13 and serine 63. Serine 63 acts as the Phosphoserine intermediate in catalysis. Residues histidine 122, arginine 152 to aspartate 153, arginine 184, arginine 190, arginine 256 to arginine 259, and lysine 330 each bind substrate. The Mn(2+) site is built by aspartate 397, histidine 401, aspartate 438, histidine 439, and histidine 457.

It belongs to the BPG-independent phosphoglycerate mutase family. In terms of assembly, monomer. Mn(2+) serves as cofactor.

The catalysed reaction is (2R)-2-phosphoglycerate = (2R)-3-phosphoglycerate. The protein operates within carbohydrate degradation; glycolysis; pyruvate from D-glyceraldehyde 3-phosphate: step 3/5. Functionally, catalyzes the interconversion of 2-phosphoglycerate and 3-phosphoglycerate. The polypeptide is 2,3-bisphosphoglycerate-independent phosphoglycerate mutase (Laribacter hongkongensis (strain HLHK9)).